A 430-amino-acid polypeptide reads, in one-letter code: Sphingosine-1-phosphate phosphatase 1 (430 aa).

Residues 34-100 (GSPKAGEDAE…PRRAGSLRRN (67 aa)) are disordered. Position 101 is a phosphoserine (Ser101). The residue at position 103 (Thr103) is a Phosphothreonine. A run of 4 helical transmembrane segments spans residues 121–141 (FCFGTELGNELFYIIFFPFWI), 152–172 (LVIIWVLVMYLGQCTKDIIRW), 193–213 (MPSTHAMSGTAIPIAMILLTY), and 216–236 (WQYPLIYGLILIPCWSSLVCL). The segment at 167-175 (KDIIRWPRP) is phosphatase sequence motif I. Residues 194 to 197 (PSTH) form a phosphatase sequence motif II region. Catalysis depends on His197, which acts as the Proton donor. The phosphatase sequence motif III stretch occupies residues 237 to 248 (SRIYMGMHSILD). His244 functions as the Nucleophile in the catalytic mechanism. A run of 5 helical transmembrane segments spans residues 246–266 (ILDVIAGFLYTILILIIFYPL), 279–299 (YAPLIIIGLHLILGIFSFTLD), 311–331 (ILGSGAGIACGSHAAYNLGIS), 348–368 (VTLFGKAILRVVIGMLLVLFV), and 409–429 (YGTVGFSITFLIPYIFSFIGI).

The protein belongs to the type 2 lipid phosphate phosphatase family.

Its subcellular location is the endoplasmic reticulum membrane. The protein localises to the cell membrane. The catalysed reaction is sphinganine 1-phosphate + H2O = sphinganine + phosphate. The enzyme catalyses sphing-4-enine 1-phosphate + H2O = sphing-4-enine + phosphate. In terms of biological role, specifically dephosphorylates sphingosine 1-phosphate (S1P), dihydro-S1P, and phyto-S1P. Does not act on ceramide 1-phosphate, lysophosphatidic acid or phosphatidic acid. Sphingosine-1-phosphate phosphatase activity is needed for efficient recycling of sphingosine into the sphingolipid synthesis pathway. Regulates the intracellular levels of the bioactive sphingolipid metabolite S1P that regulates diverse biological processes acting both as an extracellular receptor ligand or as an intracellular second messenger. Involved in efficient ceramide synthesis from exogenous sphingoid bases. Converts S1P to sphingosine, which is readily metabolized to ceramide via ceramide synthase. In concert with sphingosine kinase 2 (SphK2), recycles sphingosine into ceramide through a phosphorylation/dephosphorylation cycle. Regulates endoplasmic-to-Golgi trafficking of ceramides, resulting in the regulation of ceramide levels in the endoplasmic reticulum, preferentially long-chain ceramide species, and influences the anterograde membrane transport of both ceramide and proteins from the endoplasmic reticulum to the Golgi apparatus. The modulation of intracellular ceramide levels in turn regulates apoptosis. Via S1P levels, modulates resting tone, intracellular Ca(2+) and myogenic vasoconstriction in resistance arteries. Also involved in unfolded protein response (UPR) and ER stress-induced autophagy via regulation of intracellular S1P levels. Involved in the regulation of epidermal homeostasis and keratinocyte differentiation. The sequence is that of Sphingosine-1-phosphate phosphatase 1 from Rattus norvegicus (Rat).